A 240-amino-acid chain; its full sequence is MATKIFSLLMLLALSACVANATIFPQCSQAPIASLLPPYLPSMIASVCENPALQPYRLQQAIAASNIPLSPLLFQQSPALSLVQSLVQTIRAQQLQQLVLPLINQVALANLSPYSQQQQFLPFNQLSTLNPAAYLQQQLLPFSQLATAYSQQQQLLPFNQLAALNPAAYLQQQILLPFSQLAAANRASFLTQQQLLPFYQQFAANPATLLQLQQLLPFVQLALTDPAASYQQHIIGGALF.

The first 21 residues, 1 to 21, serve as a signal peptide directing secretion; it reads MATKIFSLLMLLALSACVANA.

The protein belongs to the zein family.

Its function is as follows. Zeins are major seed storage proteins. The sequence is that of Zein-alpha 19C1 from Zea mays (Maize).